Here is a 103-residue protein sequence, read N- to C-terminus: uncharacterized protein (103 aa).

Low complexity predominate over residues 38 to 51 (TTTTSSTTSASTTS). Residues 38-70 (TTTTSSTTSASTTSQPSFSLPTSCNSNSPQSNL) form a disordered region. Residues 52–70 (QPSFSLPTSCNSNSPQSNL) show a composition bias toward polar residues.

This is an uncharacterized protein from Dictyostelium discoideum (Social amoeba).